We begin with the raw amino-acid sequence, 64 residues long: Conotoxin Cal6.24 (64 aa).

The N-terminal stretch at 1–22 (MKLTCVMIVAVLVLTVCKVVTS) is a signal peptide. Disulfide bonds link cysteine 32/cysteine 50, cysteine 40/cysteine 54, and cysteine 49/cysteine 60.

In terms of tissue distribution, expressed by the venom duct.

The protein resides in the secreted. In terms of biological role, probable neurotoxin. The chain is Conotoxin Cal6.24 from Californiconus californicus (California cone).